The primary structure comprises 341 residues: Malate dehydrogenase 1, mitochondrial (341 aa).

A mitochondrion-targeting transit peptide spans 1–22 (MFRSMLVRSSASAKQAVIRRSF). NAD(+) is bound by residues 36–42 (GAAGGIG) and Asp62. 2 residues coordinate substrate: Arg109 and Arg115. NAD(+) is bound by residues Asn122 and 145–147 (ISN). Substrate-binding residues include Asn147 and Arg181. The active-site Proton acceptor is His205. Residue Met256 coordinates NAD(+).

This sequence belongs to the LDH/MDH superfamily. MDH type 1 family. In terms of assembly, homodimer. In terms of processing, forms intramolecular disulfide bonds. Expressed in rosette leaves.

The protein resides in the mitochondrion matrix. The enzyme catalyses (S)-malate + NAD(+) = oxaloacetate + NADH + H(+). Negatively regulated by ATP. Not redox-regulated. The formation of intramolecular disulfide bonds does not alter enzymatic activity. Functionally, catalyzes a reversible NAD-dependent dehydrogenase reaction involved in central metabolism and redox homeostasis between organelle compartments. Required for carbon dioxide and energy partitioning in leaves. May limit photorespiration during the dark phase. Its activity is essential to shuttle reductants out from the mitochondria to support the photorespiratory flux. Can convert 2-oxoglutarate to (S)-2-hydroxyglutarate in vitro. The sequence is that of Malate dehydrogenase 1, mitochondrial from Arabidopsis thaliana (Mouse-ear cress).